Consider the following 198-residue polypeptide: Dynein axonemal light chain 1 (198 aa).

LRR repeat units lie at residues 49 to 70 (ACKH…SGME), 71 to 92 (NLRI…DAVA), 94 to 115 (TLEE…EKLV), and 116 to 137 (NLRV…DKLA). The LRRCT domain maps to 157–195 (KENNATSEYRIEVVKRLPNLKKLDGMPVDVDEREQANVA).

It belongs to the dynein light chain LC1-type family. Interacts with OCAD2, a outer arm dynein heavy chain. Interacts with tubulin (previously called p45) located within the A-tubule of the outer doublets in a ATP-independent manner.

It is found in the cytoplasm. The protein resides in the cytoskeleton. It localises to the flagellum axoneme. Functionally, part of the multisubunit axonemal ATPase complexes that generate the force for flagellar motility and govern beat frequency. Component of the outer arm dynein (ODA). May be involved in a mechanosensory feedback mechanism controlling ODA activity based on external conformational cues by tethering the outer arm dynein heavy chain (ODA2) to the A-tubule of the outer doublet microtubules within the axoneme. The protein is Dynein axonemal light chain 1 of Chlamydomonas reinhardtii (Chlamydomonas smithii).